The chain runs to 1227 residues: JNK-interacting protein 3 (1227 aa).

The disordered stretch occupies residues 1–22 (MMDNDDALLNNGGPQSGAETVY). Residues 25–113 (EDNNMVMSEK…VTQYEREKSA (89 aa)) enclose the RH1 domain. Positions 84-191 (RINQEQDVEV…TELFKNHVDY (108 aa)) form a coiled coil. The segment at 281–323 (DALQQQHHATSPQSPDSSPVVPNVPTNVGRSTTKKEQRSDNNL) is disordered. Residues 290-308 (TSPQSPDSSPVVPNVPTNV) are compositionally biased toward low complexity. A coiled-coil region spans residues 363–489 (GKEVENLIME…EAVRLTEILR (127 aa)). The RH2 domain maps to 453–524 (RKRFTRVEMA…PSNRPTERVA (72 aa)). Disordered stretches follow at residues 517–572 (NRPT…HPAS), 804–851 (GKVE…AEEP), and 863–889 (PLPGAPQRLSTDGNQTNNNNNSSSSSN). Over residues 526 to 540 (GLGGGPMFRHTGGGS) the composition is skewed to gly residues. The segment covering 541–550 (PAHSHGSPSR) has biased composition (low complexity). Positions 807-817 (EFVRVKPKSDD) are enriched in basic and acidic residues. The stretch at 814-849 (KSDDEQNSNEKQQQEEEEAKEATEKSNEQLPAVSAE) forms a coiled coil. Low complexity predominate over residues 879 to 889 (NNNNNSSSSSN).

Belongs to the JIP scaffold family. Forms homo- and heterooligomeric complexes. Binds the TPR motif-containing C-terminal of kinesin light chain, Klc. Pre-assembled syd scaffolding complexes are then transported as a cargo of kinesin, to the required subcellular location.

The protein localises to the cytoplasm. Functionally, the JNK-interacting protein (JIP) group of scaffold proteins selectively mediates JNK-signaling by aggregating specific components of the MAPK cascade to form a functional JNK signaling module. May function as a regulator of vesicle transport, through interactions with the JNK-signaling components and motor proteins. Syd is required for efficient kinesin-I mediated axonal transport. This Drosophila melanogaster (Fruit fly) protein is JNK-interacting protein 3 (syd).